We begin with the raw amino-acid sequence, 554 residues long: Protein SINE2 (554 aa).

An ARMADILLO-type fold region spans residues 17-290 (DKDPDSHKTA…MAAHETMRQA (274 aa)). Disordered stretches follow at residues 306-332 (CKPRNSLSGSVKSTSSLREHDGSVYSR), 411-442 (NESVCSRTNRSRSSRRNTKKRQSGDICSKHHR), and 465-487 (ETSSSSSIYDTSGTTTPTNTTED). Residues 311 to 321 (SLSGSVKSTSS) show a composition bias toward low complexity. Residues 322-332 (LREHDGSVYSR) show a composition bias toward basic and acidic residues. Over residues 419-431 (NRSRSSRRNTKKR) the composition is skewed to basic residues. Residues 465–485 (ETSSSSSIYDTSGTTTPTNTT) show a composition bias toward low complexity. The region spanning 509–554 (LDPRLGRSKGVLKLGLSVFSIAVAGFASFMWMYLQDDMMPPHLVPT) is the KASH domain. A helical transmembrane segment spans residues 522–542 (LGLSVFSIAVAGFASFMWMYL). A Required for nuclear localization motif is present at residues 551-554 (LVPT).

As to quaternary structure, interacts with SUN1 and SUN2. Expressed in epidermal cells, mesophyll cells, trichomes and root cells.

It is found in the nucleus membrane. In terms of biological role, plays a role in innate immunity against the oomycete pathogen A.arabidopsidis (Hpa). This Arabidopsis thaliana (Mouse-ear cress) protein is Protein SINE2.